Here is a 61-residue protein sequence, read N- to C-terminus: Metallothionein-2 (61 aa).

Methionine 1 is subject to N-acetylmethionine. Positions 1-29 are beta; the sequence is MDPNCSCVAGDSCTCAGSCKCKECKCTSC. Cysteine 5, cysteine 7, cysteine 13, cysteine 15, cysteine 19, cysteine 21, cysteine 24, cysteine 26, cysteine 29, cysteine 33, cysteine 34, cysteine 36, cysteine 37, cysteine 41, cysteine 44, cysteine 48, cysteine 50, cysteine 57, cysteine 59, and cysteine 60 together coordinate a divalent metal cation. The segment at 20–25 is antigenic epitope; that stretch reads KCKECK. Residues 30 to 61 form an alpha region; the sequence is KKSCCSCCPVGCAKCAQGCICKGASDKCNCCA.

Belongs to the metallothionein superfamily. Type 1 family.

Metallothioneins have a high content of cysteine residues that bind various heavy metals; these proteins are transcriptionally regulated by both heavy metals and glucocorticoids. The chain is Metallothionein-2 (MT2) from Macaca fascicularis (Crab-eating macaque).